The primary structure comprises 141 residues: Hemoglobin subunit alpha-D (141 aa).

A Globin domain is found at 1–141 (MLTADDKKIL…VAAVLAEKYR (141 aa)). Residues histidine 58 and histidine 87 each contribute to the heme b site.

It belongs to the globin family. As to quaternary structure, heterotetramer of two alpha-D chains and two beta chains. Red blood cells.

In terms of biological role, involved in oxygen transport from the lung to the various peripheral tissues. This Branta canadensis (Canada goose) protein is Hemoglobin subunit alpha-D (HBAD).